Reading from the N-terminus, the 350-residue chain is Protein YIPF3 (350 aa).

A compositionally biased stretch (low complexity) spans 1 to 10 (MATTAAPAGG). Residues 1–51 (MATTAAPAGGARNGAGPEWGGFEENIQGGGSAVIDMENMDDTSGSSFEDMG) are disordered. The residue at position 2 (alanine 2) is an N-acetylalanine. At 2–148 (ATTAAPAGGA…PIKMVNFPQK (147 aa)) the chain is on the cytoplasmic side. Residues 149-169 (IAGELYGPLMLVFTLVAILLH) traverse the membrane as a helical segment. At 170 to 187 (GMKTSDTIIREGTLMGTA) the chain is on the lumenal side. A helical transmembrane segment spans residues 188-208 (IGTCFGYWLGVSSFIYFLAYL). At 209–214 (CNAQIT) the chain is on the cytoplasmic side. A helical membrane pass occupies residues 215 to 237 (MLQMLALLGYGLFGHCIVLFITY). Residues 238-240 (NIH) lie on the Lumenal side of the membrane. A helical transmembrane segment spans residues 241–263 (LHALFYLFWLLVGGLSTLRMVAV). Topologically, residues 264–274 (LVSRTVGPTQR) are cytoplasmic. A helical membrane pass occupies residues 275–295 (LLLCGTLAALHMLFLLYLHFA). At 296–350 (YHKVVEGILDTLEGPNIPPIQRVPRDIPAMLPAARLPTTVLNATAKAVAVTLQSH) the chain is on the lumenal side. Threonine 333 and threonine 334 each carry an O-linked (GalNAc...) threonine glycan. Asparagine 337 is a glycosylation site (N-linked (GlcNAc...) asparagine). Threonine 339 and threonine 346 each carry an O-linked (GalNAc...) threonine glycan.

Belongs to the YIP1 family. In terms of assembly, interacts with YIPF4 and YIPF5. Post-translationally, N-glycosylated in the ER (40 kDa form I), then O-glycosylated in the Golgi apparatus (46 kDa form II), the C-terminal lumenal region is later removed in the Golgi apparatus to produce a 36 kDa form III. O-glycosylated with core 1-like and core 2-like glycans. O-glycan heterogeneity at Thr-346: HexNAc (minor), HexHexNAc (major), Hex1HexNAc2 (minor), Hex2HexNAc2 (minor) and dHex1Hex2HexNAc2 (minor). As to expression, expressed by nucleated hematopoietic cells (at protein level).

The protein resides in the cell membrane. It localises to the cytoplasm. It is found in the golgi apparatus. Its subcellular location is the cis-Golgi network membrane. Involved in the maintenance of the Golgi structure. May play a role in hematopoiesis. The sequence is that of Protein YIPF3 (YIPF3) from Homo sapiens (Human).